The chain runs to 282 residues: WRKY transcription factor 71 (282 aa).

Residues 63–121 form a disordered region; it reads LTSNSPVVSSSSNEGEPKENTNDKSDQMEDNEGDLHGVGESSKQLTKQGKKKGEKKERE. Low complexity predominate over residues 65 to 75; sequence SNSPVVSSSSN. Basic and acidic residues predominate over residues 77 to 99; the sequence is GEPKENTNDKSDQMEDNEGDLHG. The segment at residues 130–195 is a DNA-binding region (WRKY); sequence SEIDHLEDGY…YEGKHNHPIP (66 aa).

The protein belongs to the WRKY group II-c family.

The protein localises to the nucleus. In terms of biological role, transcription factor. Interacts specifically with the W box (5'-(T)TGAC[CT]-3'), a frequently occurring elicitor-responsive cis-acting element. This chain is WRKY transcription factor 71 (WRKY71), found in Arabidopsis thaliana (Mouse-ear cress).